Here is a 272-residue protein sequence, read N- to C-terminus: Cell division protein FtsQ (272 aa).

At 1–43 the chain is on the cytoplasmic side; that stretch reads MEYNPPNTRERIVARRQRMRRNSTEPVVPGWRWRLREGLRSGR. Residues 44-64 form a helical membrane-spanning segment; it reads IVSGIVFVISCFALFYVLFSS. Over 65–272 the chain is Extracellular; it reads RFRVQTVEVV…FYQYRPDGSS (208 aa). Positions 66-133 constitute a POTRA domain; the sequence is FRVQTVEVVG…DRARIVIVER (68 aa).

It belongs to the FtsQ/DivIB family. FtsQ subfamily.

The protein resides in the cell membrane. In terms of biological role, essential cell division protein. In Chloroflexus aurantiacus (strain ATCC 29366 / DSM 635 / J-10-fl), this protein is Cell division protein FtsQ.